The chain runs to 174 residues: Adipose-secreted signaling protein (174 aa).

Position 2 is an N-acetylalanine (Ala-2). Thr-147 bears the Phosphothreonine mark.

It belongs to the ADISSP family.

The protein localises to the secreted. Its function is as follows. Adipocyte-secreted protein (adipokine) that acts as a key regulator for white adipose tissue (WAT) thermogenesis and glucose homeostasis at least in part through activation of protein kinase A (PKA). In Homo sapiens (Human), this protein is Adipose-secreted signaling protein.